A 715-amino-acid chain; its full sequence is 1,4-alpha-glucan branching enzyme GlgB (715 aa).

Catalysis depends on D396, which acts as the Nucleophile. E449 functions as the Proton donor in the catalytic mechanism.

Belongs to the glycosyl hydrolase 13 family. GlgB subfamily. As to quaternary structure, monomer.

It carries out the reaction Transfers a segment of a (1-&gt;4)-alpha-D-glucan chain to a primary hydroxy group in a similar glucan chain.. It functions in the pathway glycan biosynthesis; glycogen biosynthesis. In terms of biological role, catalyzes the formation of the alpha-1,6-glucosidic linkages in glycogen by scission of a 1,4-alpha-linked oligosaccharide from growing alpha-1,4-glucan chains and the subsequent attachment of the oligosaccharide to the alpha-1,6 position. This Aliivibrio fischeri (strain ATCC 700601 / ES114) (Vibrio fischeri) protein is 1,4-alpha-glucan branching enzyme GlgB.